The following is a 446-amino-acid chain: 3-phosphoshikimate 1-carboxyvinyltransferase (446 aa).

Positions 21, 22, and 26 each coordinate 3-phosphoshikimate. K21 lines the phosphoenolpyruvate pocket. Phosphoenolpyruvate contacts are provided by G94 and R122. S167, Q169, D315, and K342 together coordinate 3-phosphoshikimate. Q169 is a phosphoenolpyruvate binding site. Catalysis depends on D315, which acts as the Proton acceptor. The phosphoenolpyruvate site is built by R346 and R388.

This sequence belongs to the EPSP synthase family. In terms of assembly, monomer.

The protein resides in the cytoplasm. The catalysed reaction is 3-phosphoshikimate + phosphoenolpyruvate = 5-O-(1-carboxyvinyl)-3-phosphoshikimate + phosphate. It participates in metabolic intermediate biosynthesis; chorismate biosynthesis; chorismate from D-erythrose 4-phosphate and phosphoenolpyruvate: step 6/7. Functionally, catalyzes the transfer of the enolpyruvyl moiety of phosphoenolpyruvate (PEP) to the 5-hydroxyl of shikimate-3-phosphate (S3P) to produce enolpyruvyl shikimate-3-phosphate and inorganic phosphate. The chain is 3-phosphoshikimate 1-carboxyvinyltransferase from Alkalilimnicola ehrlichii (strain ATCC BAA-1101 / DSM 17681 / MLHE-1).